Reading from the N-terminus, the 748-residue chain is Spidroin-1 (748 aa).

25 tandem repeats follow at residues Q1–G25, A26–G38, A39–G66, A67–G96, A97–G130, A131–G158, A159–G191, A192–G204, A205–G235, A236–G262, A263–G292, A293–G305, A306–G333, A334–G360, A361–G394, A395–G424, A425–G458, A459–G485, A486–G512, A513–G525, S526–G555, A556–G582, A583–G612, V613–G642, and A643–S655. Positions Q1–S655 are 25 X approximate tandem repeats.

It belongs to the silk fibroin family. As to quaternary structure, major subunit, with spidroin 2, of the dragline silk.

The protein localises to the secreted. It localises to the extracellular space. Spiders' major ampullate silk possesses unique characteristics of strength and elasticity. Fibroin consists of pseudocrystalline regions of antiparallel beta-sheet interspersed with elastic amorphous segments. The sequence is that of Spidroin-1 from Trichonephila clavipes (Golden silk orbweaver).